A 504-amino-acid polypeptide reads, in one-letter code: Cholesterol 7-alpha-monooxygenase (504 aa).

Cys-444 is a binding site for heme.

Belongs to the cytochrome P450 family. It depends on heme as a cofactor.

Its subcellular location is the endoplasmic reticulum membrane. It localises to the microsome membrane. It catalyses the reaction cholesterol + reduced [NADPH--hemoprotein reductase] + O2 = 7alpha-hydroxycholesterol + oxidized [NADPH--hemoprotein reductase] + H2O + H(+). Its pathway is lipid metabolism; bile acid biosynthesis. In terms of biological role, catalyzes a rate-limiting step in cholesterol catabolism and bile acid biosynthesis by introducing a hydrophilic moiety at position 7 of cholesterol. Important for cholesterol homeostasis. This chain is Cholesterol 7-alpha-monooxygenase (CYP7A1), found in Cricetulus griseus (Chinese hamster).